The sequence spans 144 residues: NADH dehydrogenase [ubiquinone] 1 alpha subcomplex subunit 13 (144 aa).

The residue at position 2 (Ala2) is an N-acetylalanine. A helical transmembrane segment spans residues 30-51 (LSGYSMFAVGIGALLFGYWSMM).

As to quaternary structure, complex I is composed of 45 different subunits. Interacts with CARD15, but not with CARD4. Interacts with STAT3, but not with STAT1, STAT2 and STAT5A. Interacts with OLFM4.

It is found in the mitochondrion inner membrane. Its subcellular location is the nucleus. Its function is as follows. Accessory subunit of the mitochondrial membrane respiratory chain NADH dehydrogenase (Complex I), that is believed not to be involved in catalysis. Complex I functions in the transfer of electrons from NADH to the respiratory chain. The immediate electron acceptor for the enzyme is believed to be ubiquinone. Involved in the interferon/all-trans-retinoic acid (IFN/RA) induced cell death. This apoptotic activity is inhibited by interaction with viral IRF1. Prevents the transactivation of STAT3 target genes. May play a role in CARD15-mediated innate mucosal responses and serve to regulate intestinal epithelial cell responses to microbes. The protein is NADH dehydrogenase [ubiquinone] 1 alpha subcomplex subunit 13 (NDUFA13) of Bos taurus (Bovine).